A 304-amino-acid chain; its full sequence is Polyisoprenyl-teichoic acid--peptidoglycan teichoic acid transferase TagU (304 aa).

At methionine 1–lysine 4 the chain is on the cytoplasmic side. The chain crosses the membrane as a helical; Signal-anchor for type II membrane protein span at residues isoleucine 5–tyrosine 25. The Extracellular portion of the chain corresponds to asparagine 26–lysine 304.

This sequence belongs to the LytR/CpsA/Psr (LCP) family.

It is found in the cell membrane. The protein operates within cell wall biogenesis. Its function is as follows. May catalyze the final step in cell wall teichoic acid biosynthesis, the transfer of the anionic cell wall polymers (APs) from their lipid-linked precursor to the cell wall peptidoglycan (PG). The sequence is that of Polyisoprenyl-teichoic acid--peptidoglycan teichoic acid transferase TagU from Bacillus mycoides (strain KBAB4) (Bacillus weihenstephanensis).